The primary structure comprises 210 residues: Imidazoleglycerol-phosphate dehydratase (210 aa).

A disordered region spans residues 1–23 (MNDSLLSNGHAPPLRQATVDRQT).

Belongs to the imidazoleglycerol-phosphate dehydratase family.

It localises to the cytoplasm. It catalyses the reaction D-erythro-1-(imidazol-4-yl)glycerol 3-phosphate = 3-(imidazol-4-yl)-2-oxopropyl phosphate + H2O. It functions in the pathway amino-acid biosynthesis; L-histidine biosynthesis; L-histidine from 5-phospho-alpha-D-ribose 1-diphosphate: step 6/9. The protein is Imidazoleglycerol-phosphate dehydratase of Thermosynechococcus vestitus (strain NIES-2133 / IAM M-273 / BP-1).